The sequence spans 349 residues: Protein RecA (349 aa).

Residue 64–71 (GPESSGKT) coordinates ATP.

Belongs to the RecA family.

It is found in the cytoplasm. Can catalyze the hydrolysis of ATP in the presence of single-stranded DNA, the ATP-dependent uptake of single-stranded DNA by duplex DNA, and the ATP-dependent hybridization of homologous single-stranded DNAs. It interacts with LexA causing its activation and leading to its autocatalytic cleavage. The protein is Protein RecA of Rhodopseudomonas palustris (strain ATCC BAA-98 / CGA009).